We begin with the raw amino-acid sequence, 462 residues long: Argininosuccinate lyase (462 aa).

The protein belongs to the lyase 1 family. Argininosuccinate lyase subfamily.

Its subcellular location is the cytoplasm. The enzyme catalyses 2-(N(omega)-L-arginino)succinate = fumarate + L-arginine. Its pathway is amino-acid biosynthesis; L-arginine biosynthesis; L-arginine from L-ornithine and carbamoyl phosphate: step 3/3. The chain is Argininosuccinate lyase from Rippkaea orientalis (strain PCC 8801 / RF-1) (Cyanothece sp. (strain PCC 8801)).